Reading from the N-terminus, the 37-residue chain is Large ribosomal subunit protein bL36c (37 aa).

Belongs to the bacterial ribosomal protein bL36 family.

It localises to the plastid. It is found in the chloroplast. This is Large ribosomal subunit protein bL36c from Staurastrum punctulatum (Green alga).